A 785-amino-acid chain; its full sequence is MKLGKVELCRFLQLIALFLCFSGMNQAELPRSRSKPYFQLGRSRTKRSWVWNQFFVLEEYMGSDPLYVGKLHSDVDKGDGFIKYILSGEGASSIFIIDENTGDIHATKRLDREEQAYYTLRAQALDRLTNKPVEPESEFVIKIQDINDNEPKFLDGPYTAGVPEMSPVGTSVVQVTATDADDPTYGNSARVVYSILQGQPYFSVEPKTGVIKTALPNMDREAKDQYLLVIQAKDMVGQNGGLSGTTSVTVTLTDVNDNPPRFPRRSYQYNGPESLPVASVVARIKAADADIGVNAEMEYKIVDGDGLGIFKISPDKDTQEGIITIQKELDFEAKTSYTLRIEAANRDADPRFLSLGPFSDTTTVKIIVEDVDEPPVFSSPLYPMEVSEATQVGHIIGTVAAHDPDSSNSPVRYSIDRNTDLERYFNIDANSGIITTAKSLDRETNPVHNITVLAMESQNPSQVGRGYVAITILDINDNAPEFAMDYETTVCENAQPGQVIQKISAIDKDEPSNGHQFYFSLTTDMANNLNSSLKDNKDNTASILTRRNGFRRQEQSVYYLPIFIVDNGSPSLSSTNTLTIRVCDCDADGIAQTCNAEAYILPAGLSTGALIAILACVLTLLVLILLIVTMKRRKKEPLIFDEERDIRENIVRYDDEGGGEEDTEAFDMAALRNLNVVRDTKTRRDVTPEIQFLSRPTFKNIPDNVIFREFIWERLKEADVDPGAPPYDSLQTYAFEGNGSVAESLGSLDSNSSNSDQNYDYLSDWGPRFKRLAEMYGNGQESLYS.

The first 27 residues, 1-27, serve as a signal peptide directing secretion; that stretch reads MKLGKVELCRFLQLIALFLCFSGMNQA. Residues 28–47 constitute a propeptide that is removed on maturation; that stretch reads ELPRSRSKPYFQLGRSRTKR. Residues 28-607 lie on the Extracellular side of the membrane; that stretch reads ELPRSRSKPY…AYILPAGLST (580 aa). 5 Cadherin domains span residues 49-153, 154-262, 263-377, 378-482, and 482-599; these read WVWN…EPKF, LDGP…PPRF, PRRS…PPVF, SSPL…APEF, and FAMD…AEAY. Asparagine 449 and asparagine 530 each carry an N-linked (GlcNAc...) asparagine glycan. A helical transmembrane segment spans residues 608-628; the sequence is GALIAILACVLTLLVLILLIV. At 629 to 785 the chain is on the cytoplasmic side; sequence TMKRRKKEPL…YGNGQESLYS (157 aa).

Its subcellular location is the cell membrane. Functionally, cadherins are calcium-dependent cell adhesion proteins. They preferentially interact with themselves in a homophilic manner in connecting cells; cadherins may thus contribute to the sorting of heterogeneous cell types. The sequence is that of Cadherin-7 (Cdh7) from Rattus norvegicus (Rat).